Reading from the N-terminus, the 571-residue chain is Proline--tRNA ligase (571 aa).

This sequence belongs to the class-II aminoacyl-tRNA synthetase family. ProS type 1 subfamily. As to quaternary structure, homodimer.

Its subcellular location is the cytoplasm. It catalyses the reaction tRNA(Pro) + L-proline + ATP = L-prolyl-tRNA(Pro) + AMP + diphosphate. Functionally, catalyzes the attachment of proline to tRNA(Pro) in a two-step reaction: proline is first activated by ATP to form Pro-AMP and then transferred to the acceptor end of tRNA(Pro). As ProRS can inadvertently accommodate and process non-cognate amino acids such as alanine and cysteine, to avoid such errors it has two additional distinct editing activities against alanine. One activity is designated as 'pretransfer' editing and involves the tRNA(Pro)-independent hydrolysis of activated Ala-AMP. The other activity is designated 'posttransfer' editing and involves deacylation of mischarged Ala-tRNA(Pro). The misacylated Cys-tRNA(Pro) is not edited by ProRS. The chain is Proline--tRNA ligase from Photobacterium profundum (strain SS9).